Consider the following 433-residue polypeptide: Zinc carboxypeptidase A 1 (433 aa).

The N-terminal stretch at 1-28 (MVRLNSAAGSRWWAPAMAILAVALSVEA) is a signal peptide. Residues 130-423 (DYHTLEEIHA…DSLITLLEES (294 aa)) form the Peptidase M14 domain. Zn(2+)-binding residues include His187 and Glu190. The cysteines at positions 253 and 276 are disulfide-linked. His312 is a Zn(2+) binding site. Glu387 serves as the catalytic Proton donor/acceptor.

Belongs to the peptidase M14 family. It depends on Zn(2+) as a cofactor. Expressed in the posterior midgut in pupae and female adults.

It localises to the secreted. Functionally, involved in the digestion of the blood meal. In Anopheles gambiae (African malaria mosquito), this protein is Zinc carboxypeptidase A 1.